Here is a 77-residue protein sequence, read N- to C-terminus: Sec-independent protein translocase protein TatA (77 aa).

A helical membrane pass occupies residues 1–21 (MGSFSIWHWLIVLVIVMLVFG). A disordered region spans residues 50-77 (ADASTQQKISGGQTLEGEAREKVEKTHS). The segment covering 53–62 (STQQKISGGQ) has biased composition (polar residues). A compositionally biased stretch (basic and acidic residues) spans 66-77 (GEAREKVEKTHS).

The protein belongs to the TatA/E family. As to quaternary structure, the Tat system comprises two distinct complexes: a TatABC complex, containing multiple copies of TatA, TatB and TatC subunits, and a separate TatA complex, containing only TatA subunits. Substrates initially bind to the TatABC complex, which probably triggers association of the separate TatA complex to form the active translocon.

The protein localises to the cell inner membrane. Part of the twin-arginine translocation (Tat) system that transports large folded proteins containing a characteristic twin-arginine motif in their signal peptide across membranes. TatA could form the protein-conducting channel of the Tat system. This chain is Sec-independent protein translocase protein TatA, found in Azoarcus sp. (strain BH72).